Reading from the N-terminus, the 259-residue chain is Emerin (259 aa).

The residue at position 1 (M1) is an N-acetylmethionine. In terms of domain architecture, LEM spans 1–45 (MDDYAVLSDTELAAVLRQYNIPHGPIVGSTRKLYEKKIFEYETQR). A phosphoserine mark is found at S8, S29, S54, S72, S88, S99, S141, and S142. The segment at 46–223 (RRLLPPNSSS…PAAALGQDRQ (178 aa)) is interaction with F-actin. The residue at position 161 (Y161) is a Phosphotyrosine. Residues 168–187 (RPISNVSRSSLGLSYYPTSS) are interaction with CTNNB1. Residues S171, S174, and S176 each carry the phosphoserine modification. Residues 224 to 244 (VPLWGQLLLFLVFAAFLLFVY) form a helical membrane-spanning segment.

In terms of assembly, interacts with lamins A and C, BANF1, GMCL, BCLAF1 and YTHDC1/YT521. Interacts with TMEM43; the interaction retains emerin in the inner nuclear membrane. Interacts with ACTB, SPTAN1, F-actin, CTNNB1 and beta-tubulin. Interacts with SUN1 and SUN2. Interacts with TMEM201. Interacts with NEMP1. As to expression, in the ovary, highest expression is seen in primordial follicle oocytes (at protein level). Detected in embryonic fibroblasts, skeletal muscle, heart muscle and tongue epithelium (at protein level). Widely expressed.

It is found in the nucleus inner membrane. Its subcellular location is the nucleus outer membrane. Stabilizes and promotes the formation of a nuclear actin cortical network. Stimulates actin polymerization in vitro by binding and stabilizing the pointed end of growing filaments. Inhibits beta-catenin activity by preventing its accumulation in the nucleus. Acts by influencing the nuclear accumulation of beta-catenin through a CRM1-dependent export pathway. Links centrosomes to the nuclear envelope via a microtubule association. Required for proper localization of non-farnesylated prelamin-A/C. Together with NEMP1, contributes to nuclear envelope stiffness in germ cells. The polypeptide is Emerin (Emd) (Mus musculus (Mouse)).